We begin with the raw amino-acid sequence, 524 residues long: Na(+)/H(+) antiporter NhaG (524 aa).

A run of 11 helical transmembrane segments spans residues 6-26, 33-53, 59-79, 98-118, 126-146, 169-189, 193-213, 242-262, 283-303, 312-332, and 374-394; these read LHHIFELGFFVVMIAAGITAI, PYPIALVIVGTIIGLVHIPLF, FITEGEVFNFVIITLFLPALL, VLALFGGTLISFLIVGFSSMW, AAFVFAALMSATDPVSVLSIF, LAVVLFNISAFYLMTYLDLGI, GLGLWEFVKVISLGLIIGGVL, FLLAEMAGASGVIAVVVAALI, FWDVAALLANSLVFLMVGLEI, WGLAIMAIVIVLIARSAAVYI, and DILVFAFSVVLFSLVVQGLTI.

The protein belongs to the monovalent cation:proton antiporter 1 (CPA1) transporter (TC 2.A.36) family.

It localises to the cell membrane. Its function is as follows. Na(+)/H(+) antiporter that extrudes sodium in exchange for external protons. Can also transport lithium. This is Na(+)/H(+) antiporter NhaG (nhaG) from Bacillus atrophaeus.